The following is a 1821-amino-acid chain: PH-interacting protein (1821 aa).

Ser-136 carries the post-translational modification Phosphoserine. WD repeat units follow at residues 181 to 222 (GHLS…ATLR), 224 to 262 (HAAE…PLAV), 265 to 310 (GHSA…INPR), 319 to 360 (RPGV…KISE), and 363 to 402 (FHTD…WKSI). Lys-421 participates in a covalent cross-link: Glycyl lysine isopeptide (Lys-Gly) (interchain with G-Cter in SUMO2). WD repeat units follow at residues 422–461 (ITKM…LIHV), 464–504 (GHED…KVRS), and 512–551 (QGHG…KYDK). 6 positions are modified to phosphoserine: Ser-641, Ser-659, Ser-674, Ser-677, Ser-683, and Ser-692. 2 disordered regions span residues 653 to 695 (EQDL…SGQI) and 782 to 927 (DLGD…RLAV). Polar residues predominate over residues 665–681 (SNASRVNRGSVSSTSEV). Residues 800–810 (SALEETPRPLE) show a composition bias toward basic and acidic residues. The span at 841–854 (SDGSSSDYSSDYSD) shows a compositional bias: low complexity. Phosphoserine occurs at positions 879, 880, 881, and 911. Positions 912 to 924 (PKKKKPKERKQKR) are enriched in basic residues. The segment at 924–1129 (RLAVGELTEN…MELIPNNAVF (206 aa)) is mediates interaction with IRS1. In terms of domain architecture, Bromo 1 spans 1156–1263 (WGANPRDEEC…DLLLHFIKDQ (108 aa)). Ser-1281, Ser-1283, and Ser-1296 each carry phosphoserine. A disordered region spans residues 1282–1310 (DSEEEEKDADVPGTSTRKRKDHQPRRRLR). Residues 1297–1310 (TRKRKDHQPRRRLR) show a composition bias toward basic residues. Ser-1315 is modified (phosphoserine). The Bromo 2 domain maps to 1316–1421 (YDIQAWKKQC…AFFEEHISSV (106 aa)). Thr-1359 is subject to Phosphothreonine. The residue at position 1405 (Ser-1405) is a Phosphoserine. Over residues 1435–1446 (NTISKKRKKRNR) the composition is skewed to basic residues. The segment at 1435-1507 (NTISKKRKKR…PESSSVVRTR (73 aa)) is disordered. Residues 1447 to 1457 (SSSLSSSAASS) show a composition bias toward low complexity. Residue Lys-1470 forms a Glycyl lysine isopeptide (Lys-Gly) (interchain with G-Cter in SUMO1); alternate linkage. A Glycyl lysine isopeptide (Lys-Gly) (interchain with G-Cter in SUMO2); alternate cross-link involves residue Lys-1470. Positions 1471–1482 (SEVSTSPFSIPT) are enriched in polar residues. Phosphoserine is present on Ser-1479. N6-acetyllysine is present on Lys-1497. Ser-1525 carries the post-translational modification Phosphoserine. Position 1533 is an N6-acetyllysine (Lys-1533). Residues 1556–1576 (STLSSPDPLTFSHATKNNSAK) are compositionally biased toward polar residues. Disordered regions lie at residues 1556-1596 (STLS…VFSK), 1623-1676 (QVNG…NSEQ), and 1740-1785 (RSNR…DSEE). Position 1560 is a phosphoserine (Ser-1560). A Glycyl lysine isopeptide (Lys-Gly) (interchain with G-Cter in SUMO2) cross-link involves residue Lys-1644. A Phosphoserine modification is found at Ser-1651. Lys-1670 is covalently cross-linked (Glycyl lysine isopeptide (Lys-Gly) (interchain with G-Cter in SUMO2)). Ser-1762 and Ser-1783 each carry phosphoserine.

In terms of assembly, interacts (via bromo domain) with acetylated lysine residues on histone H1.4, histone H3 and H4 (in vitro). Interacts with IRS1 and IRS2. Widely expressed with most abundant expression detected in pancreatic islets, brain and skeletal muscle. Predominantly expressed in developing and regenerating neurons. Expressed in adult brain (granular layer of the olfactorium bulb, hippocampus, dentate gyrus and cerebellum internal granular layer). Expressed in the CA3 region of adult hippocampus, adult and fetal retina, perinatal dorsal root ganglion and embryonal olfactory epithelia (at protein level).

Its subcellular location is the nucleus. Functionally, probable regulator of the insulin and insulin-like growth factor signaling pathways. Stimulates cell proliferation through regulation of cyclin transcription and has an anti-apoptotic activity through AKT1 phosphorylation and activation. Plays a role in the regulation of cell morphology and cytoskeletal organization. In Mus musculus (Mouse), this protein is PH-interacting protein (Phip).